Consider the following 86-residue polypeptide: Small ribosomal subunit protein uS17 (86 aa).

It belongs to the universal ribosomal protein uS17 family. Part of the 30S ribosomal subunit.

One of the primary rRNA binding proteins, it binds specifically to the 5'-end of 16S ribosomal RNA. The protein is Small ribosomal subunit protein uS17 of Roseiflexus sp. (strain RS-1).